Here is a 209-residue protein sequence, read N- to C-terminus: Large ribosomal subunit protein uL3 (209 aa).

N5-methylglutamine is present on Gln150.

This sequence belongs to the universal ribosomal protein uL3 family. Part of the 50S ribosomal subunit. Forms a cluster with proteins L14 and L19. Post-translationally, methylated by PrmB.

In terms of biological role, one of the primary rRNA binding proteins, it binds directly near the 3'-end of the 23S rRNA, where it nucleates assembly of the 50S subunit. This is Large ribosomal subunit protein uL3 from Klebsiella pneumoniae (strain 342).